A 139-amino-acid chain; its full sequence is Ribonuclease VapC36 (139 aa).

The PINc domain maps to 1–127 (MIVDTSAVVA…GNDFPQTDLE (127 aa)). Residues aspartate 4 and aspartate 100 each coordinate Mg(2+).

The protein belongs to the PINc/VapC protein family. It depends on Mg(2+) as a cofactor.

Toxic component of a type II toxin-antitoxin (TA) system. An RNase. Its cognate antitoxin is VapB36. The chain is Ribonuclease VapC36 from Mycobacterium tuberculosis (strain ATCC 25618 / H37Rv).